Reading from the N-terminus, the 333-residue chain is Testin-2 (333 aa).

An N-terminal signal peptide occupies residues 1-17 (MIAVLFLAILCLEIDST). 3 disulfides stabilise this stretch: Cys-135-Cys-178, Cys-169-Cys-211, and Cys-269-Cys-322. N-linked (GlcNAc...) asparagine glycosylation is present at Asn-173. Active-site residues include His-276 and Asn-300.

The protein belongs to the peptidase C1 family. Expressed in testis and ovary. Low level in spleen, epididymis, kidney, and uterus. Expressed in primary cultures of Sertoli cells.

Its subcellular location is the secreted. In Mus musculus (Mouse), this protein is Testin-2.